The primary structure comprises 436 residues: Hydrogenobyrinate a,c-diamide synthase (436 aa).

A GATase cobBQ-type domain is found at 244 to 435 (HIAVARDDAF…MHVIDFCGEK (192 aa)). Cys327 acts as the Nucleophile in catalysis.

The protein belongs to the CobB/CbiA family. The cofactor is Mg(2+).

It carries out the reaction hydrogenobyrinate + 2 L-glutamine + 2 ATP + 2 H2O = hydrogenobyrinate a,c-diamide + 2 L-glutamate + 2 ADP + 2 phosphate + 2 H(+). The protein operates within cofactor biosynthesis; adenosylcobalamin biosynthesis; cob(II)yrinate a,c-diamide from precorrin-2 (aerobic route): step 9/10. In terms of biological role, catalyzes the ATP-dependent amidation of the two carboxylate groups at positions a and c of hydrogenobyrinate, using either L-glutamine or ammonia as the nitrogen source. This Brucella anthropi (strain ATCC 49188 / DSM 6882 / CCUG 24695 / JCM 21032 / LMG 3331 / NBRC 15819 / NCTC 12168 / Alc 37) (Ochrobactrum anthropi) protein is Hydrogenobyrinate a,c-diamide synthase.